Consider the following 426-residue polypeptide: Glutamate-1-semialdehyde 2,1-aminomutase (426 aa).

At lysine 265 the chain carries N6-(pyridoxal phosphate)lysine.

This sequence belongs to the class-III pyridoxal-phosphate-dependent aminotransferase family. HemL subfamily. As to quaternary structure, homodimer. Pyridoxal 5'-phosphate serves as cofactor.

It is found in the cytoplasm. It catalyses the reaction (S)-4-amino-5-oxopentanoate = 5-aminolevulinate. The protein operates within porphyrin-containing compound metabolism; protoporphyrin-IX biosynthesis; 5-aminolevulinate from L-glutamyl-tRNA(Glu): step 2/2. This chain is Glutamate-1-semialdehyde 2,1-aminomutase, found in Sodalis glossinidius (strain morsitans).